The primary structure comprises 411 residues: Lysosome-associated membrane glycoprotein 2 (411 aa).

The signal sequence occupies residues 1–26 (MRLLSPVTGSKLVLLFLFLGAVRSDA). Residues 27–188 (LKLNLTDSKG…SKHEQVCKED (162 aa)) form a first lumenal domain region. At 27–376 (LKLNLTDSKG…QDCSADEDNF (350 aa)) the chain is on the lumenal side. A disulfide bond links Cys38 and Cys75. 15 N-linked (GlcNAc...) asparagine glycosylation sites follow: Asn46, Asn57, Asn71, Asn97, Asn109, Asn117, Asn175, Asn223, Asn230, Asn243, Asn261, Asn276, Asn308, Asn318, and Asn357. Cys149 and Cys185 are disulfide-bonded. Positions 189 to 229 (KTATTVAPIIHTTVPSPTTTLTPTSIPVPTPTVGNYTISNG) are hinge. Positions 230-376 (NATCLLATMG…QDCSADEDNF (147 aa)) are second lumenal domain. The cysteines at positions 233 and 266 are disulfide-linked. An intrachain disulfide couples Cys332 to Cys369. The helical transmembrane segment at 377 to 400 (LVPIAVGAALGGVLILVLLAYFIG) threads the bilayer. The Cytoplasmic segment spans residues 401 to 411 (LKRHHTGYEQF). Residues 402 to 405 (KRHH) are important for binding and subsequent lysosomal degradation of target proteins.

The protein belongs to the LAMP family. As to quaternary structure, monomer. Forms large homooligomers. Interacts (via its cytoplasmic region) with HSPA8; HSPA8 mediates recruitment of proteins with a KFERQ motif to the surface of the lysosome for chaperone-mediated autophagy. Interacts with HSP90 in the lysosome lumen; this enhances LAMP2 stability. Interacts with MLLT11. Interacts with ABCB9. Interacts with FURIN. Interacts with CT55; this interaction may be important for LAMP2 protein stability. Interacts with TMEM175; inhibiting the proton channel activity of TMEM175. Forms a ternary complex with RAB7A and RUFY4 (via RUN domain); the interaction with RAB7A is mediated by RUFY4 (via RUN and coiled coil domains). Post-translationally, extensively N-glycosylated. Contains a minor proportion of O-linked glycans. Contains sialylated glycans. In terms of tissue distribution, detected in liver, kidney, spleen and macrophages (at protein level).

The protein resides in the lysosome membrane. It is found in the endosome membrane. Its subcellular location is the cell membrane. The protein localises to the cytoplasmic vesicle. It localises to the autophagosome membrane. Functionally, lysosomal membrane glycoprotein which plays an important role in lysosome biogenesis, lysosomal pH regulation and autophagy. Acts as an important regulator of lysosomal lumen pH regulation by acting as a direct inhibitor of the proton channel TMEM175, facilitating lysosomal acidification for optimal hydrolase activity. Plays an important role in chaperone-mediated autophagy, a process that mediates lysosomal degradation of proteins in response to various stresses and as part of the normal turnover of proteins with a long biological half-live. Functions by binding target proteins, such as GAPDH, NLRP3 and MLLT11, and targeting them for lysosomal degradation. In the chaperone-mediated autophagy, acts downstream of chaperones, such as HSPA8/HSC70, which recognize and bind substrate proteins and mediate their recruitment to lysosomes, where target proteins bind LAMP2. Plays a role in lysosomal protein degradation in response to starvation. Required for the fusion of autophagosomes with lysosomes during autophagy. Cells that lack LAMP2 express normal levels of VAMP8, but fail to accumulate STX17 on autophagosomes, which is the most likely explanation for the lack of fusion between autophagosomes and lysosomes. Required for normal degradation of the contents of autophagosomes. Required for efficient MHC class II-mediated presentation of exogenous antigens via its function in lysosomal protein degradation; antigenic peptides generated by proteases in the endosomal/lysosomal compartment are captured by nascent MHC II subunits. Is not required for efficient MHC class II-mediated presentation of endogenous antigens. The chain is Lysosome-associated membrane glycoprotein 2 (Lamp2) from Rattus norvegicus (Rat).